The chain runs to 361 residues: tRNA pseudouridine synthase D (361 aa).

D76 (nucleophile) is an active-site residue. In terms of domain architecture, TRUD spans 151 to 318 (GIPNYFGYQR…EQGSRRLAWI (168 aa)).

Belongs to the pseudouridine synthase TruD family.

The catalysed reaction is uridine(13) in tRNA = pseudouridine(13) in tRNA. Its function is as follows. Responsible for synthesis of pseudouridine from uracil-13 in transfer RNAs. This is tRNA pseudouridine synthase D from Wolinella succinogenes (strain ATCC 29543 / DSM 1740 / CCUG 13145 / JCM 31913 / LMG 7466 / NCTC 11488 / FDC 602W) (Vibrio succinogenes).